The sequence spans 310 residues: Probable manganese-dependent inorganic pyrophosphatase (310 aa).

6 residues coordinate Mn(2+): H9, D13, D15, D75, H97, and D149.

It belongs to the PPase class C family. Requires Mn(2+) as cofactor.

It is found in the cytoplasm. It carries out the reaction diphosphate + H2O = 2 phosphate + H(+). The polypeptide is Probable manganese-dependent inorganic pyrophosphatase (Brevibacillus brevis (strain 47 / JCM 6285 / NBRC 100599)).